Consider the following 480-residue polypeptide: PTS system sucrose-specific EIIBC component (480 aa).

In terms of domain architecture, PTS EIIB type-1 spans 4-87 (KKSAENILQA…EKITGKEASS (84 aa)). The active-site Phosphocysteine intermediate; for EIIB activity is C26. Helical transmembrane passes span 109–129 (LSDI…LMGI), 158–178 (MINI…GFSA), 182–202 (FGGN…PELM), 264–284 (LLTP…FVGP), 303–323 (FGGA…VITG), 349–369 (PIAT…FFII), 405–425 (PFIG…FFKV), and 449–469 (LHYG…TYAL). Residues 120–480 (IVAGGLLMGI…YRKKYRNIEA (361 aa)) form the PTS EIIC type-1 domain.

Its subcellular location is the cell membrane. The enzyme catalyses N(pros)-phospho-L-histidyl-[protein](out) + sucrose = sucrose 6(G)-phosphate(in) + L-histidyl-[protein]. In terms of biological role, the phosphoenolpyruvate-dependent sugar phosphotransferase system (sugar PTS), a major carbohydrate active transport system, catalyzes the phosphorylation of incoming sugar substrates concomitantly with their translocation across the cell membrane. This system is involved in sucrose transport. The chain is PTS system sucrose-specific EIIBC component from Staphylococcus xylosus.